The chain runs to 1060 residues: Valine--tRNA ligase, mitochondrial (1060 aa).

The transit peptide at 1-15 directs the protein to the mitochondrion; sequence MPHLPLASFRPPLWG. The segment at 25-50 is disordered; the sequence is PQALCTQPEPHGSPVSRRNREAKQKR. Positions 146 to 156 match the 'HIGH' region motif; sequence PNVTGSLHIGH. Position 548 is an N6-acetyllysine (lysine 548). Positions 659 to 663 match the 'KMSKS' region motif; sequence KMSKS. Lysine 662 is a binding site for ATP.

Belongs to the class-I aminoacyl-tRNA synthetase family.

Its subcellular location is the mitochondrion. It catalyses the reaction tRNA(Val) + L-valine + ATP = L-valyl-tRNA(Val) + AMP + diphosphate. In terms of biological role, catalyzes the attachment of valine to tRNA(Val) in a two-step reaction: valine is first activated by ATP to form Val-AMP and then transferred to the acceptor end of tRNA(Val). This is Valine--tRNA ligase, mitochondrial (Vars2) from Mus musculus (Mouse).